A 559-amino-acid chain; its full sequence is Hepatocyte nuclear factor 1-beta-A (559 aa).

The tract at residues 1–35 (MFANMVSKLTSLQQELLSALLDSGVTKDVLLQALE) is dimerization. The region spanning 5-36 (MVSKLTSLQQELLSALLDSGVTKDVLLQALED) is the HNF-p1 domain. The tract at residues 53–98 (MSPSGSKLSDTDSKPVFHTLTNGHSKGKLSGDEGSEDGDDYDTPPI) is disordered. The span at 85-94 (EGSEDGDDYD) shows a compositional bias: acidic residues. The 96-residue stretch at 100-195 (KELQSQNTEE…ILRQFNQATQ (96 aa)) folds into the POU-specific atypical domain. The segment at residues 240–320 (LRRNRFKWGP…NRRKEEAFRQ (81 aa)) is a DNA-binding region (homeobox; HNF1-type). Composition is skewed to low complexity over residues 334–354 (LNSLLSHSSPHHPQTSSSPPS) and 370–381 (TSSTTINHHSSN). The segment at 334 to 384 (LNSLLSHSSPHHPQTSSSPPSKMQGVRYSQQGPGEVTSSTTINHHSSNAMS) is disordered.

Belongs to the HNF1 homeobox family. In terms of assembly, binds DNA as a dimer. Can form homodimer or heterodimer with HNF1-alpha. As to expression, during embryonic development, expressed dynamically in the developing hindbrain, kidney (pronephros), gut, liver and pancreas; expressed in both intermediate mesoderm (precursor to the kidney) and the caudal hindbrain (including rhombomeres r5 and r6) at 10 hpf with expression diminishing caudally by 14 hpf. Strongly expressed in adult kidney, gut, liver and swim bladder; weakly expressed in brain, eye, testis, ovary and heart.

It localises to the nucleus. Its function is as follows. Transcription factor that binds to the inverted palindrome 5'-GTTAATNATTAAC-3'. Required for induction of rhombomere r5/r6 gene expression in the hindbrain. In Danio rerio (Zebrafish), this protein is Hepatocyte nuclear factor 1-beta-A (hnf1ba).